We begin with the raw amino-acid sequence, 97 residues long: Coiled-coil domain-containing protein 167 (97 aa).

A coiled-coil region spans residues 10 to 79 (GVALEIDGLE…LRQENRKNML (70 aa)). A helical transmembrane segment spans residues 77-97 (NMLLSVAIFLLLTVIYAYWAL).

Its subcellular location is the membrane. This is Coiled-coil domain-containing protein 167 (CCDC167) from Bos taurus (Bovine).